The chain runs to 253 residues: tRNA pseudouridine synthase A (253 aa).

Aspartate 53 acts as the Nucleophile in catalysis. Tyrosine 112 provides a ligand contact to substrate.

This sequence belongs to the tRNA pseudouridine synthase TruA family. As to quaternary structure, homodimer.

It carries out the reaction uridine(38/39/40) in tRNA = pseudouridine(38/39/40) in tRNA. In terms of biological role, formation of pseudouridine at positions 38, 39 and 40 in the anticodon stem and loop of transfer RNAs. This is tRNA pseudouridine synthase A from Lactococcus lactis subsp. cremoris (strain SK11).